The chain runs to 923 residues: Carnitine O-acetyltransferase YAT2 (923 aa).

Over residues 1-11 (MSSGSTIVSSD) the composition is skewed to polar residues. Disordered regions lie at residues 1 to 21 (MSSG…KHEE) and 197 to 232 (NKPY…KRKH). Position 2 is an N-acetylserine (serine 2). Residues 12-21 (KSGRTFKHEE) show a composition bias toward basic and acidic residues. Residues 204–219 (DLEDPDYSSDEDDNDE) are compositionally biased toward acidic residues. Positions 220 to 232 (PTQKDFDDRKRKH) are enriched in basic and acidic residues. Residues 529–541 (GRRS…VKPD) and serine 567 each bind CoA. Serine 576 contributes to the (R)-carnitine binding site. Residues 763-787 (NAVNNPPKRNGHTVNGSRKTSSSSQ) are disordered. Residues 774-787 (HTVNGSRKTSSSSQ) show a composition bias toward polar residues. Phosphoserine is present on serine 783.

The protein belongs to the carnitine/choline acetyltransferase family.

The protein resides in the cytoplasm. It catalyses the reaction (R)-carnitine + acetyl-CoA = O-acetyl-(R)-carnitine + CoA. In terms of biological role, carnitine O-acetyltransferase involved in the shutteling of acetyl-CoA in the cell. The chain is Carnitine O-acetyltransferase YAT2 from Saccharomyces cerevisiae (strain ATCC 204508 / S288c) (Baker's yeast).